Here is a 331-residue protein sequence, read N- to C-terminus: Low affinity immunoglobulin epsilon Fc receptor (331 aa).

Residues 1–23 are Cytoplasmic-facing; the sequence is MEENEYSGYWEPPRKRCCCARRG. 2 S-palmitoyl cysteine lipidation sites follow: Cys-17 and Cys-18. The helical; Signal-anchor for type II membrane protein transmembrane segment at 24-49 threads the bilayer; sequence TQLMLVGLLSTAMWAGLLALLLLWHW. The Extracellular segment spans residues 50 to 331; sequence ETEKNLKQLG…PTRPTPKSEP (282 aa). Asn-65 carries an N-linked (GlcNAc...) asparagine glycan. 3 repeats span residues 71–91, 92–112, and 113–133; these read KDLQKFQSNQLAQKSQVVQMS, QNLQELQAEQKQMKAQDSRLS, and QNLTGLQEDLRNAQSQNSKLS. N-linked (GlcNAc...) asparagine glycosylation occurs at Asn-114. 4 disulfides stabilise this stretch: Cys-183-Cys-311, Cys-186-Cys-197, Cys-214-Cys-305, and Cys-282-Cys-296. The region spanning 185 to 298 is the C-type lectin domain; the sequence is ICPKNWLHFQ…GQWNDAFCRS (114 aa). Positions 272, 292, and 293 each coordinate Ca(2+). Ser-319 carries O-linked (Xyl...) (chondroitin sulfate) serine glycosylation.

As to quaternary structure, homotrimer. Interacts (via C-type lectin domain) with IGHE (via CH3 region); this interaction regulates IgE homeostasis. Interacts (via C-terminus) with CR2/CD21 (via Sushi domain 1 and 2). In terms of processing, N- and O-glycosylated.

It localises to the cell membrane. It is found in the secreted. In terms of biological role, low-affinity receptor for immunoglobulin E (IgE) and CR2/CD21. Has essential roles in the regulation of IgE production and in the differentiation of B cells. On B cells, initiates IgE-dependent antigen uptake and presentation to T cells. On macrophages, upon IgE binding and antigen cross-linking induces intracellular killing of parasites through activation of L-Arginine-nitric oxide pathway. The protein is Low affinity immunoglobulin epsilon Fc receptor (Fcer2) of Mus musculus (Mouse).